The following is a 352-amino-acid chain: tRNA uridine(34) hydroxylase (352 aa).

The 95-residue stretch at 144-238 folds into the Rhodanese domain; it reads SDPDVILIDT…YLEEVPASDS (95 aa). Cys198 acts as the Cysteine persulfide intermediate in catalysis.

It belongs to the TrhO family.

The enzyme catalyses uridine(34) in tRNA + AH2 + O2 = 5-hydroxyuridine(34) in tRNA + A + H2O. Functionally, catalyzes oxygen-dependent 5-hydroxyuridine (ho5U) modification at position 34 in tRNAs. This Psychrobacter arcticus (strain DSM 17307 / VKM B-2377 / 273-4) protein is tRNA uridine(34) hydroxylase.